A 508-amino-acid polypeptide reads, in one-letter code: Photosystem II CP47 reaction center protein (508 aa).

Transmembrane regions (helical) follow at residues 21–36, 101–115, 140–156, 203–218, 237–252, and 457–472; these read SVHI…WAGS, IVFS…IWHW, GIHL…FGAF, IAAG…FHLS, VLSS…AFVV, and SFAL…HGAR.

Belongs to the PsbB/PsbC family. PsbB subfamily. In terms of assembly, PSII is composed of 1 copy each of membrane proteins PsbA, PsbB, PsbC, PsbD, PsbE, PsbF, PsbH, PsbI, PsbJ, PsbK, PsbL, PsbM, PsbT, PsbX, PsbY, PsbZ, Psb30/Ycf12, at least 3 peripheral proteins of the oxygen-evolving complex and a large number of cofactors. It forms dimeric complexes. It depends on Binds multiple chlorophylls. PSII binds additional chlorophylls, carotenoids and specific lipids. as a cofactor.

It localises to the plastid. The protein localises to the chloroplast thylakoid membrane. Its function is as follows. One of the components of the core complex of photosystem II (PSII). It binds chlorophyll and helps catalyze the primary light-induced photochemical processes of PSII. PSII is a light-driven water:plastoquinone oxidoreductase, using light energy to abstract electrons from H(2)O, generating O(2) and a proton gradient subsequently used for ATP formation. In Vitis vinifera (Grape), this protein is Photosystem II CP47 reaction center protein.